The sequence spans 121 residues: Cell division protein FtsL (121 aa).

Residues 1–34 are Cytoplasmic-facing; that stretch reads MISRVTEALSKVKGSIGSNERHALPGVIGDDLLR. A helical transmembrane segment spans residues 35–57; sequence FGKLPLCLFICIILTAVTVVTTA. Residues 58–121 lie on the Periplasmic side of the membrane; it reads HHTRLLTAQR…PSQENIVVQK (64 aa).

This sequence belongs to the FtsL family. In terms of assembly, part of a complex composed of FtsB, FtsL and FtsQ.

The protein resides in the cell inner membrane. In terms of biological role, essential cell division protein. May link together the upstream cell division proteins, which are predominantly cytoplasmic, with the downstream cell division proteins, which are predominantly periplasmic. In Salmonella typhimurium (strain LT2 / SGSC1412 / ATCC 700720), this protein is Cell division protein FtsL.